We begin with the raw amino-acid sequence, 441 residues long: Squalene synthase (441 aa).

A run of 2 helical transmembrane segments spans residues 293–313 (SFQF…LVFG) and 420–440 (FKFN…YWYA).

The protein belongs to the phytoene/squalene synthase family. Mg(2+) is required as a cofactor.

It is found in the endoplasmic reticulum membrane. It catalyses the reaction 2 (2E,6E)-farnesyl diphosphate + NADPH + H(+) = squalene + 2 diphosphate + NADP(+). The enzyme catalyses 2 (2E,6E)-farnesyl diphosphate + NADH + H(+) = squalene + 2 diphosphate + NAD(+). It functions in the pathway terpene metabolism; lanosterol biosynthesis; lanosterol from farnesyl diphosphate: step 1/3. Its function is as follows. Catalyzes the condensation of 2 two farnesyl pyrophosphate moieties to form squalene. It is the first committed enzyme of the sterol biosynthesis pathway. Required for the biosynthesis of ergosterol. This Eremothecium gossypii (strain ATCC 10895 / CBS 109.51 / FGSC 9923 / NRRL Y-1056) (Yeast) protein is Squalene synthase (ERG9).